The sequence spans 273 residues: Protein INAPERTURATE POLLEN1 (273 aa).

A DOG1 domain is found at 12–267; that stretch reads SRRFNDFYED…KDQILLQDFE (256 aa).

As to expression, expressed only in anthers and in pollen. Not detected in other flower tissues, stems, leaves and siliques.

It is found in the cytoplasm. Required for the formation of pollen surface apertures, which arise by restriction of exine deposition at specific sites. The aperture length depends on the INP1 dosage. Does not play a role in specifying the number or position of apertures. Acts in a sporophytic manner. This Arabidopsis thaliana (Mouse-ear cress) protein is Protein INAPERTURATE POLLEN1.